Consider the following 466-residue polypeptide: MAPQQNIMKQLQQMQSSPYPSSSPSSTTVSQNNDNLNHNVHSLNNSSNNNNNNNNNNNNNNNNNNNNNNNNNNNNNNNNNNNNSINEKNKINDNNNRGNSDDGNNNNSNNNSNNNNSNNNNRDDEEEEGDDEDNNNNNNSNNNKIRGYNDNNDINDIFSINFSSWSKSKDNLIENGVLIFEESGLYKELNLSKSSILNFLSIVASSYRNNPFHSFNHAIAVTQTIFLILLKTNLFNILSPIEKLSIIIASICHDLDHPALSNRFQINMKSSIAVLYNNKSVLENHHLSICLGILESKIGNELLSTLTVEEKKQFFRRVKILILATDMENHFTYKKQFDDIISTFSWDNSEHRDLLLIMFLKSADISNELRSFDISNKWANALMEEFFNQSDLEKLNNLPLTPFMEREKVVLHLTQVSFIEKFLLPSYQSLQNLLPSLEDFVQRIIENKEIWSNNGSSSSTTSSSPN.

The span at 1-120 (MAPQQNIMKQ…NSNNNNSNNN (120 aa)) shows a compositional bias: low complexity. The disordered stretch occupies residues 1–150 (MAPQQNIMKQ…NNNKIRGYND (150 aa)). The span at 123–134 (DDEEEEGDDEDN) shows a compositional bias: acidic residues. Residues 135–150 (NNNNNSNNNKIRGYND) show a composition bias toward low complexity. Positions 137–458 (NNNSNNNKIR…EIWSNNGSSS (322 aa)) constitute a PDEase domain. Residue H213 is the Proton donor of the active site. Residues H217, H253, D254, and D364 each coordinate a divalent metal cation.

The protein belongs to the cyclic nucleotide phosphodiesterase family. It depends on a divalent metal cation as a cofactor.

It is found in the cytoplasm. The protein resides in the cytosol. It carries out the reaction 3',5'-cyclic GMP + H2O = GMP + H(+). With respect to regulation, inhibited by 3-isobutyl-1-methylxanthine (IBMX). Functionally, phosphodiesterase specific for cGMP, which is not activated by cGMP. Involved in the degradation of intracellular cGMP. The protein is cGMP-specific 3',5'-cGMP phosphodiesterase 3 (pde3) of Dictyostelium discoideum (Social amoeba).